The sequence spans 100 residues: Replication restart protein PriB (100 aa).

Positions 1 to 100 (MTNRIELSGV…VLHADKISQI (100 aa)) constitute an SSB domain.

Belongs to the PriB family. In terms of assembly, homodimer. Interacts with PriA and DnaT. Component of the replication restart primosome. Primosome assembly occurs via a 'hand-off' mechanism. PriA binds to replication forks, subsequently PriB then DnaT bind; DnaT then displaces ssDNA to generate the helicase loading substrate.

Involved in the restart of stalled replication forks, which reloads the replicative helicase on sites other than the origin of replication; the PriA-PriB pathway is the major replication restart pathway. During primosome assembly it facilitates complex formation between PriA and DnaT on DNA; stabilizes PriA on DNA. Stimulates the DNA unwinding activity of PriA helicase. The polypeptide is Replication restart protein PriB (Vibrio cholerae serotype O1 (strain ATCC 39315 / El Tor Inaba N16961)).